A 568-amino-acid polypeptide reads, in one-letter code: 2-succinyl-5-enolpyruvyl-6-hydroxy-3-cyclohexene-1-carboxylate synthase (568 aa).

This sequence belongs to the TPP enzyme family. MenD subfamily. Homodimer. Mg(2+) is required as a cofactor. It depends on Mn(2+) as a cofactor. Requires thiamine diphosphate as cofactor.

The enzyme catalyses isochorismate + 2-oxoglutarate + H(+) = 5-enolpyruvoyl-6-hydroxy-2-succinyl-cyclohex-3-ene-1-carboxylate + CO2. It functions in the pathway quinol/quinone metabolism; 1,4-dihydroxy-2-naphthoate biosynthesis; 1,4-dihydroxy-2-naphthoate from chorismate: step 2/7. It participates in quinol/quinone metabolism; menaquinone biosynthesis. Catalyzes the thiamine diphosphate-dependent decarboxylation of 2-oxoglutarate and the subsequent addition of the resulting succinic semialdehyde-thiamine pyrophosphate anion to isochorismate to yield 2-succinyl-5-enolpyruvyl-6-hydroxy-3-cyclohexene-1-carboxylate (SEPHCHC). The protein is 2-succinyl-5-enolpyruvyl-6-hydroxy-3-cyclohexene-1-carboxylate synthase of Haemophilus influenzae (strain 86-028NP).